Consider the following 592-residue polypeptide: Prospero homeobox protein 2 (592 aa).

Disordered regions lie at residues 20–56, 85–129, 155–218, 308–336, and 353–382; these read EACT…PEWF, GNAQ…RKGG, KPRD…LPSG, RLDS…PLTA, and RYNN…LRPW. Residues 95-106 show a composition bias toward basic residues; that stretch reads CPKKARERKRKQ. Over residues 201–211 the composition is skewed to basic and acidic residues; it reads SGAEKHQESEK. Pro residues predominate over residues 314 to 331; sequence YPIPPRMTPKPCQDPPAN. A compositionally biased stretch (low complexity) spans 360-377; it reads SSSPPQDSSSQRHPSSEP. Residues 437–495 form the Prospero-type homeo domain; sequence QEGLNPGHLKKAKLMFFFTRYPSSNLLKVYFPDVQFNRCITSQMIKWFSNFREFYYIQM. Positions 437 to 592 are homeo-Prospero; sequence QEGLNPGHLK…EIFKSSSYPQ (156 aa). Residues 496–592 enclose the Prospero domain; the sequence is EKSARQAISD…EIFKSSSYPQ (97 aa).

Belongs to the Prospero homeodomain family.

The protein localises to the nucleus. Functionally, transcription regulator. Does not seem to be essential for embryonic development and postnatal survival. This chain is Prospero homeobox protein 2 (PROX2), found in Homo sapiens (Human).